We begin with the raw amino-acid sequence, 123 residues long: UPF0231 protein PMI2039 (123 aa).

This sequence belongs to the UPF0231 family.

The sequence is that of UPF0231 protein PMI2039 from Proteus mirabilis (strain HI4320).